Here is a 425-residue protein sequence, read N- to C-terminus: Tyrosine--tRNA ligase (425 aa).

Tyr37 contributes to the L-tyrosine binding site. The 'HIGH' region motif lies at 42 to 51 (PTADSLHLGH). 2 residues coordinate L-tyrosine: Tyr175 and Gln179. The 'KMSKS' region motif lies at 235–239 (KFGKT). Lys238 lines the ATP pocket. Positions 357–414 (ADLQQALVSAELVPSRGQARTMISSNAVTINGEKQADPEYTFSASDRLFDRYTLLRRG) constitute an S4 RNA-binding domain.

It belongs to the class-I aminoacyl-tRNA synthetase family. TyrS type 1 subfamily. In terms of assembly, homodimer.

The protein resides in the cytoplasm. It catalyses the reaction tRNA(Tyr) + L-tyrosine + ATP = L-tyrosyl-tRNA(Tyr) + AMP + diphosphate + H(+). Functionally, catalyzes the attachment of tyrosine to tRNA(Tyr) in a two-step reaction: tyrosine is first activated by ATP to form Tyr-AMP and then transferred to the acceptor end of tRNA(Tyr). This chain is Tyrosine--tRNA ligase, found in Pectobacterium carotovorum subsp. carotovorum (strain PC1).